A 284-amino-acid polypeptide reads, in one-letter code: Nucleotide-binding protein NMB0738 (284 aa).

8-15 (GLSGSGKS) serves as a coordination point for ATP. GTP is bound at residue 58–61 (DVRS).

It belongs to the RapZ-like family.

Functionally, displays ATPase and GTPase activities. The polypeptide is Nucleotide-binding protein NMB0738 (Neisseria meningitidis serogroup B (strain ATCC BAA-335 / MC58)).